Consider the following 281-residue polypeptide: Survival motor neuron protein 1 (281 aa).

2 disordered regions span residues 1–20 and 42–77; these read MANGAEDVVFCRGTGQSDDS and ALKGEDGATPQENDNPGKKRKNNKKNKSRKRCNAAP. Phosphothreonine is present on T14. Phosphoserine is present on residues S17 and S20. A compositionally biased stretch (basic residues) spans 59-73; the sequence is KKRKNNKKNKSRKRC. In terms of domain architecture, Tudor spans 80–140; that stretch reads EWQVGDSCYA…LTEPPDMDED (61 aa). The segment covering 145 to 159 has biased composition (basic and acidic residues); it reads ANVKETESSTEESDR. The tract at residues 145 to 242 is disordered; the sequence is ANVKETESST…PMSPDFGEDD (98 aa). 2 stretches are compositionally biased toward pro residues: residues 179–197 and 212–235; these read MGPPSWFPSFPPGPPPPPP and PSFPGWPPMIPLGPPMIPPPPPMS. Residues 225–252 form a P2 (binding site for SNRPB) region; it reads PPMIPPPPPMSPDFGEDDEALGSMLISW. The segment at 264–279 is required for interaction with SYNCRIP; that stretch reads GLRQGRKEAAASKKSH.

It belongs to the SMN family. As to quaternary structure, homodimer. Component of an import snRNP complex composed of kpnb1, rnut1, smn1 and znf259. Part of the core SMN complex that contains smn1, gemin2/sip1, ddx20/gemin3, gemin4, gemin5, gemin6, gemin7, gemin8 and strap/unrip. Interacts with ddx20, fbl, nola1, rnut1, syncrip and with several spliceosomal snRNP core Sm proteins, including snrpb, snrpd1, snrpd2, snrpd3, snrpe and ilf3. Interacts with elavl4.

The protein resides in the nucleus. Its subcellular location is the gem. The protein localises to the cajal body. It is found in the cytoplasm. It localises to the cytoplasmic granule. The protein resides in the perikaryon. Its subcellular location is the cell projection. The protein localises to the neuron projection. It is found in the myofibril. It localises to the sarcomere. The protein resides in the z line. Its function is as follows. The SMN complex plays an essential role in spliceosomal snRNP assembly in the cytoplasm and is required for pre-mRNA splicing in the nucleus. It may also play a role in the metabolism of snoRNPs. Required in motor neurons and proprioceptive neurons to ensure correct U12 intron splicing and proper levels of tmem41b mRNA. Required for the maturation of motor neuron axonal branches and dendrites. This is Survival motor neuron protein 1 (smn1) from Danio rerio (Zebrafish).